The following is a 351-amino-acid chain: Porphobilinogen deaminase (351 aa).

Position 242 is an S-(dipyrrolylmethanemethyl)cysteine (Cys-242).

Belongs to the HMBS family. Monomer. It depends on dipyrromethane as a cofactor.

It catalyses the reaction 4 porphobilinogen + H2O = hydroxymethylbilane + 4 NH4(+). The protein operates within porphyrin-containing compound metabolism; protoporphyrin-IX biosynthesis; coproporphyrinogen-III from 5-aminolevulinate: step 2/4. In terms of biological role, tetrapolymerization of the monopyrrole PBG into the hydroxymethylbilane pre-uroporphyrinogen in several discrete steps. This Rickettsia africae (strain ESF-5) protein is Porphobilinogen deaminase.